Consider the following 169-residue polypeptide: 16S rRNA aminocarboxypropyltransferase (169 aa).

Residues T15, V65, L88, and T107 each contribute to the S-adenosyl-L-methionine site.

Belongs to the TDD superfamily. TSR3 family.

The protein localises to the cytoplasm. It catalyses the reaction an N(1)-methylpseudouridine in rRNA + S-adenosyl-L-methionine = N(1)-methyl-N(3)-[(3S)-3-amino-3-carboxypropyl]pseudouridine in rRNA + S-methyl-5'-thioadenosine + H(+). Its function is as follows. Aminocarboxypropyltransferase that catalyzes the aminocarboxypropyl transfer on pseudouridine corresponding to position 914 in M.jannaschii 16S rRNA. It constitutes the last step in biosynthesis of the hypermodified N1-methyl-N3-(3-amino-3-carboxypropyl) pseudouridine (m1acp3-Psi). This chain is 16S rRNA aminocarboxypropyltransferase, found in Methanopyrus kandleri (strain AV19 / DSM 6324 / JCM 9639 / NBRC 100938).